The following is a 280-amino-acid chain: Acetyl-coenzyme A carboxylase carboxyl transferase subunit beta (280 aa).

In terms of domain architecture, CoA carboxyltransferase N-terminal spans 24–280 (AWIKCDKCKN…IYTLIRHTHG (257 aa)). Zn(2+)-binding residues include C28, C31, C47, and C50. Residues 28–50 (CDKCKNILYIEDLLKNLKICPHC) form a C4-type zinc finger.

This sequence belongs to the AccD/PCCB family. Acetyl-CoA carboxylase is a heterohexamer composed of biotin carboxyl carrier protein (AccB), biotin carboxylase (AccC) and two subunits each of ACCase subunit alpha (AccA) and ACCase subunit beta (AccD). Zn(2+) serves as cofactor.

The protein localises to the cytoplasm. The enzyme catalyses N(6)-carboxybiotinyl-L-lysyl-[protein] + acetyl-CoA = N(6)-biotinyl-L-lysyl-[protein] + malonyl-CoA. The protein operates within lipid metabolism; malonyl-CoA biosynthesis; malonyl-CoA from acetyl-CoA: step 1/1. Functionally, component of the acetyl coenzyme A carboxylase (ACC) complex. Biotin carboxylase (BC) catalyzes the carboxylation of biotin on its carrier protein (BCCP) and then the CO(2) group is transferred by the transcarboxylase to acetyl-CoA to form malonyl-CoA. The sequence is that of Acetyl-coenzyme A carboxylase carboxyl transferase subunit beta from Sulfurihydrogenibium sp. (strain YO3AOP1).